Reading from the N-terminus, the 190-residue chain is Glutathione peroxidase 2 (190 aa).

The active site involves selenocysteine 40. Position 40 (selenocysteine 40) is a non-standard amino acid, selenocysteine.

Belongs to the glutathione peroxidase family. In terms of assembly, homotetramer.

The protein localises to the cytoplasm. The protein resides in the cytosol. It carries out the reaction 2 glutathione + H2O2 = glutathione disulfide + 2 H2O. The enzyme catalyses a hydroperoxy polyunsaturated fatty acid + 2 glutathione = a hydroxy polyunsaturated fatty acid + glutathione disulfide + H2O. It catalyses the reaction tert-butyl hydroperoxide + 2 glutathione = tert-butanol + glutathione disulfide + H2O. The catalysed reaction is cumene hydroperoxide + 2 glutathione = 2-phenylpropan-2-ol + glutathione disulfide + H2O. It carries out the reaction (13S)-hydroperoxy-(9Z,11E)-octadecadienoate + 2 glutathione = (13S)-hydroxy-(9Z,11E)-octadecadienoate + glutathione disulfide + H2O. The enzyme catalyses (5S)-hydroperoxy-(6E,8Z,11Z,14Z)-eicosatetraenoate + 2 glutathione = (5S)-hydroxy-(6E,8Z,11Z,14Z)-eicosatetraenoate + glutathione disulfide + H2O. It catalyses the reaction (12R)-hydroperoxy-(5Z,8Z,10E,14Z)-eicosatetraenoate + 2 glutathione = (12R)-hydroxy-(5Z,8Z,10E,14Z)-eicosatetraenoate + glutathione disulfide + H2O. The catalysed reaction is (15S)-hydroperoxy-(5Z,8Z,11Z,13E)-eicosatetraenoate + 2 glutathione = (15S)-hydroxy-(5Z,8Z,11Z,13E)-eicosatetraenoate + glutathione disulfide + H2O. Its function is as follows. Catalyzes the reduction of hydroperoxides in a glutathione-dependent manner thus regulating cellular redox homeostasis. Can reduce small soluble hydroperoxides such as H2O2, cumene hydroperoxide and tert-butyl hydroperoxide, as well as several fatty acid-derived hydroperoxides. Cannot reduce phosphatidycholine hydroperoxide. The chain is Glutathione peroxidase 2 (GPX2) from Callithrix jacchus (White-tufted-ear marmoset).